We begin with the raw amino-acid sequence, 310 residues long: Leucine carboxyl methyltransferase 1 (310 aa).

S-adenosyl-L-methionine contacts are provided by residues Arg-50, Gly-75, Asp-100, 145-146 (DI), and Glu-169.

The protein belongs to the methyltransferase superfamily. LCMT family.

It carries out the reaction [phosphatase 2A protein]-C-terminal L-leucine + S-adenosyl-L-methionine = [phosphatase 2A protein]-C-terminal L-leucine methyl ester + S-adenosyl-L-homocysteine. Functionally, methylates the carboxyl group of the C-terminal leucine residue of protein phosphatase 2A catalytic subunits to form alpha-leucine ester residues. In Schizosaccharomyces pombe (strain 972 / ATCC 24843) (Fission yeast), this protein is Leucine carboxyl methyltransferase 1 (ppm1).